Reading from the N-terminus, the 432-residue chain is Phosphomevalonate kinase (432 aa).

ATP is bound by residues K10 and 142–148 (VEKTGLG).

The protein belongs to the GHMP kinase family. Mevalonate kinase subfamily.

The protein resides in the cytoplasm. It catalyses the reaction (R)-5-phosphomevalonate + ATP = (R)-5-diphosphomevalonate + ADP. The protein operates within isoprenoid biosynthesis; isopentenyl diphosphate biosynthesis via mevalonate pathway; isopentenyl diphosphate from (R)-mevalonate: step 2/3. In terms of biological role, phosphomevalonate kinase; part of the second module of ergosterol biosynthesis pathway that includes the middle steps of the pathway. ERG8 converts 5-phosphomevalonate to 5-diphosphomevalonate. The second module is carried out in the vacuole and involves the formation of farnesyl diphosphate, which is also an important intermediate in the biosynthesis of ubiquinone, dolichol, heme and prenylated proteins. Activity by the mevalonate kinase ERG12 first converts mevalonate into 5-phosphomevalonate. 5-phosphomevalonate is then further converted to 5-diphosphomevalonate by the phosphomevalonate kinase ERG8. The diphosphomevalonate decarboxylase MVD then produces isopentenyl diphosphate. The isopentenyl-diphosphate delta-isomerase IDI1 then catalyzes the 1,3-allylic rearrangement of the homoallylic substrate isopentenyl (IPP) to its highly electrophilic allylic isomer, dimethylallyl diphosphate (DMAPP). Finally the farnesyl diphosphate synthase ERG20 catalyzes the sequential condensation of isopentenyl pyrophosphate with dimethylallyl pyrophosphate, and then with the resultant geranylpyrophosphate to the ultimate product farnesyl pyrophosphate. The protein is Phosphomevalonate kinase of Candida albicans (strain SC5314 / ATCC MYA-2876) (Yeast).